Consider the following 303-residue polypeptide: Nucleotide-binding protein Acry_0446 (303 aa).

10–17 (GLSGAGRN) lines the ATP pocket. A GTP-binding site is contributed by 54–57 (DART).

Belongs to the RapZ-like family.

Its function is as follows. Displays ATPase and GTPase activities. This chain is Nucleotide-binding protein Acry_0446, found in Acidiphilium cryptum (strain JF-5).